The following is a 494-amino-acid chain: UPF0371 protein SPH_0451 (494 aa).

This sequence belongs to the UPF0371 family.

The sequence is that of UPF0371 protein SPH_0451 from Streptococcus pneumoniae (strain Hungary19A-6).